We begin with the raw amino-acid sequence, 327 residues long: Methionyl-tRNA formyltransferase (327 aa).

121 to 124 contributes to the (6S)-5,6,7,8-tetrahydrofolate binding site; that stretch reads SLLP.

This sequence belongs to the Fmt family.

It catalyses the reaction L-methionyl-tRNA(fMet) + (6R)-10-formyltetrahydrofolate = N-formyl-L-methionyl-tRNA(fMet) + (6S)-5,6,7,8-tetrahydrofolate + H(+). Functionally, attaches a formyl group to the free amino group of methionyl-tRNA(fMet). The formyl group appears to play a dual role in the initiator identity of N-formylmethionyl-tRNA by promoting its recognition by IF2 and preventing the misappropriation of this tRNA by the elongation apparatus. This Burkholderia mallei (strain ATCC 23344) protein is Methionyl-tRNA formyltransferase.